Here is a 105-residue protein sequence, read N- to C-terminus: Thioredoxin (105 aa).

The region spanning 1-105 (VQVISSYDQF…LQAAITQHSA (105 aa)) is the Thioredoxin domain. Residues cysteine 29 and cysteine 32 each act as nucleophile in the active site. A disulfide bridge links cysteine 29 with cysteine 32.

This sequence belongs to the thioredoxin family. As to quaternary structure, monomer.

In terms of biological role, participates in various redox reactions through the reversible oxidation of its active center dithiol to a disulfide and catalyzes dithiol-disulfide exchange reactions. The polypeptide is Thioredoxin (Malassezia sympodialis (Atopic eczema-associated yeast)).